The following is a 418-amino-acid chain: Light-independent protochlorophyllide reductase subunit N (418 aa).

The [4Fe-4S] cluster site is built by Cys17, Cys42, and Cys103.

The protein belongs to the BchN/ChlN family. Protochlorophyllide reductase is composed of three subunits; ChlL, ChlN and ChlB. Forms a heterotetramer of two ChlB and two ChlN subunits. The cofactor is [4Fe-4S] cluster.

The enzyme catalyses chlorophyllide a + oxidized 2[4Fe-4S]-[ferredoxin] + 2 ADP + 2 phosphate = protochlorophyllide a + reduced 2[4Fe-4S]-[ferredoxin] + 2 ATP + 2 H2O. The protein operates within porphyrin-containing compound metabolism; chlorophyll biosynthesis (light-independent). In terms of biological role, component of the dark-operative protochlorophyllide reductase (DPOR) that uses Mg-ATP and reduced ferredoxin to reduce ring D of protochlorophyllide (Pchlide) to form chlorophyllide a (Chlide). This reaction is light-independent. The NB-protein (ChlN-ChlB) is the catalytic component of the complex. This Prochlorococcus marinus (strain NATL2A) protein is Light-independent protochlorophyllide reductase subunit N.